The chain runs to 755 residues: Polyribonucleotide nucleotidyltransferase (755 aa).

Residues Asp493 and Asp499 each coordinate Mg(2+). The region spanning 560 to 619 is the KH domain; that stretch reads PRIMTIQIPVDKIGALIGPGGKTIRNICDTTGAQIDIEDDGRVFITAPDGEAAKKAISMI. Positions 629-698 constitute an S1 motif domain; that stretch reads GDIFLGKVVS…NTGKISLSRR (70 aa). Residues 704 to 755 are disordered; sequence ETPEARKAAGAAPRPRPREEQRGGREEPRSLREELRGPRRDGERPRPRRRDD. Basic and acidic residues predominate over residues 719 to 755; sequence RPREEQRGGREEPRSLREELRGPRRDGERPRPRRRDD.

This sequence belongs to the polyribonucleotide nucleotidyltransferase family. The cofactor is Mg(2+).

The protein localises to the cytoplasm. The catalysed reaction is RNA(n+1) + phosphate = RNA(n) + a ribonucleoside 5'-diphosphate. Functionally, involved in mRNA degradation. Catalyzes the phosphorolysis of single-stranded polyribonucleotides processively in the 3'- to 5'-direction. In Chloroflexus aggregans (strain MD-66 / DSM 9485), this protein is Polyribonucleotide nucleotidyltransferase.